A 277-amino-acid polypeptide reads, in one-letter code: 5'-nucleotidase SurE (277 aa).

Aspartate 16, aspartate 17, serine 48, and asparagine 101 together coordinate a divalent metal cation.

The protein belongs to the SurE nucleotidase family. It depends on a divalent metal cation as a cofactor.

Its subcellular location is the cytoplasm. The enzyme catalyses a ribonucleoside 5'-phosphate + H2O = a ribonucleoside + phosphate. In terms of biological role, nucleotidase that shows phosphatase activity on nucleoside 5'-monophosphates. The protein is 5'-nucleotidase SurE of Parvibaculum lavamentivorans (strain DS-1 / DSM 13023 / NCIMB 13966).